A 77-amino-acid chain; its full sequence is Large ribosomal subunit protein uL24c (77 aa).

This sequence belongs to the universal ribosomal protein uL24 family. In terms of assembly, part of the 50S ribosomal subunit.

It localises to the plastid. The protein resides in the chloroplast. Its function is as follows. One of two assembly initiator proteins, it binds directly to the 5'-end of the 23S rRNA, where it nucleates assembly of the 50S subunit. In Trieres chinensis (Marine centric diatom), this protein is Large ribosomal subunit protein uL24c (rpl24).